A 60-amino-acid chain; its full sequence is Small ribosomal subunit protein uS10 (60 aa).

This sequence belongs to the universal ribosomal protein uS10 family.

This Zea mays (Maize) protein is Small ribosomal subunit protein uS10 (RPS20).